We begin with the raw amino-acid sequence, 178 residues long: Probable DNA-directed RNA polymerase subunit delta (178 aa).

Positions 14–81 (LSLIDVAHFI…GNNTWGLRAW (68 aa)) constitute an HTH HARE-type domain. Disordered stretches follow at residues 89–122 (EEVQTQTTPKKKRKSDDDDDEDEEILDDDVDYDD) and 141–178 (LDEDEDDDDHLPDGIEGDLATVEDDYTDGDYTEDPEDK). Composition is skewed to acidic residues over residues 105–122 (DDDDEDEEILDDDVDYDD), 141–150 (LDEDEDDDDH), and 161–178 (TVEDDYTDGDYTEDPEDK).

It belongs to the RpoE family. In terms of assembly, RNAP is composed of a core of 2 alpha, a beta and a beta' subunits. The core is associated with a delta subunit and one of several sigma factors.

Participates in both the initiation and recycling phases of transcription. In the presence of the delta subunit, RNAP displays an increased specificity of transcription, a decreased affinity for nucleic acids, and an increased efficiency of RNA synthesis because of enhanced recycling. The protein is Probable DNA-directed RNA polymerase subunit delta of Listeria innocua serovar 6a (strain ATCC BAA-680 / CLIP 11262).